A 127-amino-acid polypeptide reads, in one-letter code: Large ribosomal subunit protein eL18 (127 aa).

Belongs to the eukaryotic ribosomal protein eL18 family.

The polypeptide is Large ribosomal subunit protein eL18 (Methanopyrus kandleri (strain AV19 / DSM 6324 / JCM 9639 / NBRC 100938)).